The chain runs to 185 residues: MADEQLNEKDLNVEETGAGNAADTRVLELEEQLAAAKDQALRAVADLQNVRRRAEQDVEKAHKFALEKFSSDLLPVIDSLELALAHSSAEDEHVKQIREGVELTLKMFQDTLKRYNLEAVDPHGQPFNPEHHQAMAMQENAEVEPNSVLNVFQKGYLLNGRLLRPAMVVVSKAPSAAQPSINEKA.

The span at 1–12 shows a compositional bias: basic and acidic residues; the sequence is MADEQLNEKDLN. The disordered stretch occupies residues 1–22; it reads MADEQLNEKDLNVEETGAGNAA.

It belongs to the GrpE family. Homodimer.

The protein resides in the cytoplasm. Functionally, participates actively in the response to hyperosmotic and heat shock by preventing the aggregation of stress-denatured proteins, in association with DnaK and GrpE. It is the nucleotide exchange factor for DnaK and may function as a thermosensor. Unfolded proteins bind initially to DnaJ; upon interaction with the DnaJ-bound protein, DnaK hydrolyzes its bound ATP, resulting in the formation of a stable complex. GrpE releases ADP from DnaK; ATP binding to DnaK triggers the release of the substrate protein, thus completing the reaction cycle. Several rounds of ATP-dependent interactions between DnaJ, DnaK and GrpE are required for fully efficient folding. The sequence is that of Protein GrpE from Pseudomonas putida (strain ATCC 700007 / DSM 6899 / JCM 31910 / BCRC 17059 / LMG 24140 / F1).